Reading from the N-terminus, the 610-residue chain is Anthocyanin regulatory Lc protein (610 aa).

Disordered stretches follow at residues Ala-402–Arg-422 and Leu-468–Thr-524. A bHLH domain is found at Thr-412–Leu-461. Positions Thr-481 to Glu-495 are enriched in polar residues. Over residues Lys-508–Arg-519 the composition is skewed to basic and acidic residues.

It belongs to the bHLH protein family. As to quaternary structure, efficient DNA binding requires dimerization with another bHLH protein.

The protein localises to the nucleus. Its function is as follows. Putative transcriptional activator. Controls tissue-specific synthesis of anthocyanin pigments in various parts of the maize plant. The chain is Anthocyanin regulatory Lc protein (LC) from Zea mays (Maize).